The chain runs to 274 residues: Dermonecrotic toxin LarSicTox-alphaIB2bii (274 aa).

H3 is a catalytic residue. Mg(2+) is bound by residues E23 and D25. Residue H39 is the Nucleophile of the active site. Disulfide bonds link C43–C49 and C45–C188. Residue D83 coordinates Mg(2+). A glycan (N-linked (GlcNAc...) asparagine) is linked at N251.

It belongs to the arthropod phospholipase D family. Class II subfamily. Mg(2+) is required as a cofactor. Expressed by the venom gland.

The protein localises to the secreted. It carries out the reaction an N-(acyl)-sphingosylphosphocholine = an N-(acyl)-sphingosyl-1,3-cyclic phosphate + choline. The enzyme catalyses an N-(acyl)-sphingosylphosphoethanolamine = an N-(acyl)-sphingosyl-1,3-cyclic phosphate + ethanolamine. The catalysed reaction is a 1-acyl-sn-glycero-3-phosphocholine = a 1-acyl-sn-glycero-2,3-cyclic phosphate + choline. It catalyses the reaction a 1-acyl-sn-glycero-3-phosphoethanolamine = a 1-acyl-sn-glycero-2,3-cyclic phosphate + ethanolamine. In terms of biological role, dermonecrotic toxins cleave the phosphodiester linkage between the phosphate and headgroup of certain phospholipids (sphingolipid and lysolipid substrates), forming an alcohol (often choline) and a cyclic phosphate. This toxin acts on sphingomyelin (SM). It may also act on ceramide phosphoethanolamine (CPE), lysophosphatidylcholine (LPC) and lysophosphatidylethanolamine (LPE), but not on lysophosphatidylserine (LPS), and lysophosphatidylglycerol (LPG). It acts by transphosphatidylation, releasing exclusively cyclic phosphate products as second products. Induces dermonecrosis, hemolysis, increased vascular permeability, edema, inflammatory response, and platelet aggregation. The sequence is that of Dermonecrotic toxin LarSicTox-alphaIB2bii from Loxosceles arizonica (Arizona brown spider).